Here is a 504-residue protein sequence, read N- to C-terminus: Anaerobic nitric oxide reductase transcription regulator NorR (504 aa).

A 4-aspartylphosphate modification is found at Asp-57. The Sigma-54 factor interaction domain maps to 187 to 416; that stretch reads MIGLSPGMTQ…LEHAIHRAVV (230 aa). Residues 215-222 and 278-287 contribute to the ATP site; these read GETGTGKE and ADNGTLFLDE. The H-T-H motif DNA-binding region spans 479–498; the sequence is WAACARMLETDVANLHRLAK.

The protein operates within nitrogen metabolism; nitric oxide reduction. Functionally, required for the expression of anaerobic nitric oxide (NO) reductase, acts as a transcriptional activator for at least the norVW operon. Activation also requires sigma-54. The sequence is that of Anaerobic nitric oxide reductase transcription regulator NorR from Shigella sonnei (strain Ss046).